Here is a 385-residue protein sequence, read N- to C-terminus: Chaperone protein DnaJ (385 aa).

Residues 5–70 (DFYDVLGVSR…QSRAAYDQFG (66 aa)) enclose the J domain. The segment at 143-221 (GKKAQVRVPG…CHGAGRVEKE (79 aa)) adopts a CR-type zinc-finger fold. Zn(2+) contacts are provided by cysteine 156, cysteine 159, cysteine 173, cysteine 176, cysteine 195, cysteine 198, cysteine 209, and cysteine 212. CXXCXGXG motif repeat units lie at residues 156 to 163 (CEVCTGTG), 173 to 180 (CPTCQGHG), 195 to 202 (CPTCHGRG), and 209 to 216 (CTNCHGAG).

This sequence belongs to the DnaJ family. In terms of assembly, homodimer. Zn(2+) serves as cofactor.

It is found in the cytoplasm. Functionally, participates actively in the response to hyperosmotic and heat shock by preventing the aggregation of stress-denatured proteins and by disaggregating proteins, also in an autonomous, DnaK-independent fashion. Unfolded proteins bind initially to DnaJ; upon interaction with the DnaJ-bound protein, DnaK hydrolyzes its bound ATP, resulting in the formation of a stable complex. GrpE releases ADP from DnaK; ATP binding to DnaK triggers the release of the substrate protein, thus completing the reaction cycle. Several rounds of ATP-dependent interactions between DnaJ, DnaK and GrpE are required for fully efficient folding. Also involved, together with DnaK and GrpE, in the DNA replication of plasmids through activation of initiation proteins. The polypeptide is Chaperone protein DnaJ (Parvibaculum lavamentivorans (strain DS-1 / DSM 13023 / NCIMB 13966)).